The following is a 122-amino-acid chain: Small ribosomal subunit protein bS6 (122 aa).

The tract at residues 95–122 (AETAPSPMMKEVQREEAKKAAAQSEQAA) is disordered.

It belongs to the bacterial ribosomal protein bS6 family.

Functionally, binds together with bS18 to 16S ribosomal RNA. This chain is Small ribosomal subunit protein bS6, found in Ralstonia nicotianae (strain ATCC BAA-1114 / GMI1000) (Ralstonia solanacearum).